A 172-amino-acid polypeptide reads, in one-letter code: MDLNNYIASIENYPQEGITFRDISPLMADGKAYSYAVREIVQYAADKDIDMIVGPEARGFIVGCPVAYALGIGFAPVRKPGKLPREVISADYEKEYGLDTLTMHADAIKPGQRVLIVDDLLATGGTVKATIEMIEKLGGVVAGCAFLVELDGLNGRKAIEGYDTKVLMNFPG.

It belongs to the purine/pyrimidine phosphoribosyltransferase family. As to quaternary structure, homodimer.

Its subcellular location is the cytoplasm. The catalysed reaction is AMP + diphosphate = 5-phospho-alpha-D-ribose 1-diphosphate + adenine. Its pathway is purine metabolism; AMP biosynthesis via salvage pathway; AMP from adenine: step 1/1. Catalyzes a salvage reaction resulting in the formation of AMP, that is energically less costly than de novo synthesis. The protein is Adenine phosphoribosyltransferase of Streptococcus agalactiae serotype III (strain NEM316).